The following is a 161-amino-acid chain: Large ribosomal subunit protein uL15 (161 aa).

A disordered region spans residues 1–57; the sequence is MRLKDAIPKKGSQQRGRRVGRGISAGQGASCGKGMRGQKSRSGGSTRPGFEGGQNPL. Positions 23-35 are enriched in gly residues; the sequence is ISAGQGASCGKGM.

This sequence belongs to the universal ribosomal protein uL15 family. In terms of assembly, part of the 50S ribosomal subunit.

Its function is as follows. Binds to the 23S rRNA. The chain is Large ribosomal subunit protein uL15 from Trichodesmium erythraeum (strain IMS101).